The chain runs to 157 residues: 2-C-methyl-D-erythritol 2,4-cyclodiphosphate synthase (157 aa).

A divalent metal cation is bound by residues D8 and H10. Residues 8-10 (DVH) and 34-35 (HS) each bind 4-CDP-2-C-methyl-D-erythritol 2-phosphate. A divalent metal cation is bound at residue H42. Residues 56-58 (DIG), 61-65 (FPDSD), 132-135 (TTTE), F139, and R142 each bind 4-CDP-2-C-methyl-D-erythritol 2-phosphate.

The protein belongs to the IspF family. In terms of assembly, homotrimer. The cofactor is a divalent metal cation.

The catalysed reaction is 4-CDP-2-C-methyl-D-erythritol 2-phosphate = 2-C-methyl-D-erythritol 2,4-cyclic diphosphate + CMP. It functions in the pathway isoprenoid biosynthesis; isopentenyl diphosphate biosynthesis via DXP pathway; isopentenyl diphosphate from 1-deoxy-D-xylulose 5-phosphate: step 4/6. Involved in the biosynthesis of isopentenyl diphosphate (IPP) and dimethylallyl diphosphate (DMAPP), two major building blocks of isoprenoid compounds. Catalyzes the conversion of 4-diphosphocytidyl-2-C-methyl-D-erythritol 2-phosphate (CDP-ME2P) to 2-C-methyl-D-erythritol 2,4-cyclodiphosphate (ME-CPP) with a corresponding release of cytidine 5-monophosphate (CMP). The chain is 2-C-methyl-D-erythritol 2,4-cyclodiphosphate synthase from Syntrophomonas wolfei subsp. wolfei (strain DSM 2245B / Goettingen).